Here is a 312-residue protein sequence, read N- to C-terminus: Methionyl-tRNA formyltransferase (312 aa).

Residue 113 to 116 participates in (6S)-5,6,7,8-tetrahydrofolate binding; sequence SLLP.

It belongs to the Fmt family.

The enzyme catalyses L-methionyl-tRNA(fMet) + (6R)-10-formyltetrahydrofolate = N-formyl-L-methionyl-tRNA(fMet) + (6S)-5,6,7,8-tetrahydrofolate + H(+). Its function is as follows. Attaches a formyl group to the free amino group of methionyl-tRNA(fMet). The formyl group appears to play a dual role in the initiator identity of N-formylmethionyl-tRNA by promoting its recognition by IF2 and preventing the misappropriation of this tRNA by the elongation apparatus. In Francisella philomiragia subsp. philomiragia (strain ATCC 25017 / CCUG 19701 / FSC 153 / O#319-036), this protein is Methionyl-tRNA formyltransferase.